Consider the following 46-residue polypeptide: Large ribosomal subunit protein bL36B (46 aa).

Belongs to the bacterial ribosomal protein bL36 family.

This is Large ribosomal subunit protein bL36B from Cronobacter sakazakii (strain ATCC BAA-894) (Enterobacter sakazakii).